A 486-amino-acid polypeptide reads, in one-letter code: B-type cell cycle switch protein ccs52B (486 aa).

Positions 24–36 match the PEST motif motif; it reads RLETLSTPPSSAS. The span at 27 to 36 shows a compositional bias: polar residues; the sequence is TLSTPPSSAS. Residues 27-57 are disordered; the sequence is TLSTPPSSASPRAISNLSSTPSPSKSSKCSD. Positions 41-53 are enriched in low complexity; it reads SNLSSTPSPSKSS. The C-box signature appears at 57-63; the sequence is DRFIPCR. Positions 87–98 match the CSM motif motif; that stretch reads AYNRLLKSELFG. WD repeat units lie at residues 177 to 214, 218 to 257, 260 to 297, 301 to 340, 343 to 385, 387 to 428, and 431 to 470; these read QDDF…VTKL, GPYD…KVRT, GHQT…DFIG, GHKS…PTLR, EHTA…QLNS, DTGS…KVAT, and GHSM…KTPA.

It belongs to the WD repeat CDC20/Fizzy family. As to expression, mostly expressed in shoot apices and, to a lower extent, in roots, especially in root tips, and in hypocotyls. Expressed in nodulation-competent root zone but not in the nodules.

The protein operates within protein modification; protein ubiquitination. Component of the anaphase promoting complex/cyclosome (APC/C), a cell cycle-regulated E3 ubiquitin-protein ligase complex that controls progression through mitosis and the G1 phase of the cell cycle. This is B-type cell cycle switch protein ccs52B from Medicago truncatula (Barrel medic).